Reading from the N-terminus, the 236-residue chain is ATP synthase subunit a (236 aa).

5 helical membrane-spanning segments follow: residues 18–38 (SNLLMVTVASVIVFLIAVLCT), 80–100 (VTLLMYIFVSNMLGLPFAIVI), 112–132 (DPAITLTLAVMVVVLSHYYGI), 179–199 (ILLSLLAGLATTGFLGTIGAA), and 200–220 (IPMLLWQGFSIFVGAIQAFIF).

It belongs to the ATPase A chain family. F-type ATPases have 2 components, CF(1) - the catalytic core - and CF(0) - the membrane proton channel. CF(1) has five subunits: alpha(3), beta(3), gamma(1), delta(1), epsilon(1). CF(0) has three main subunits: a(1), b(2) and c(9-12). The alpha and beta chains form an alternating ring which encloses part of the gamma chain. CF(1) is attached to CF(0) by a central stalk formed by the gamma and epsilon chains, while a peripheral stalk is formed by the delta and b chains.

It is found in the cell membrane. Its function is as follows. Key component of the proton channel; it plays a direct role in the translocation of protons across the membrane. In Priestia megaterium (strain ATCC 12872 / QMB1551) (Bacillus megaterium), this protein is ATP synthase subunit a.